The sequence spans 327 residues: GMP reductase (327 aa).

Catalysis depends on C176, which acts as the Thioimidate intermediate. Residue 205-228 (IIADGGIRTHGDIAKSIRFGASMV) participates in NADP(+) binding.

This sequence belongs to the IMPDH/GMPR family. GuaC type 2 subfamily.

The catalysed reaction is IMP + NH4(+) + NADP(+) = GMP + NADPH + 2 H(+). Catalyzes the irreversible NADPH-dependent deamination of GMP to IMP. It functions in the conversion of nucleobase, nucleoside and nucleotide derivatives of G to A nucleotides, and in maintaining the intracellular balance of A and G nucleotides. The protein is GMP reductase of Streptococcus pyogenes serotype M49 (strain NZ131).